Consider the following 342-residue polypeptide: Probable allantoicase (342 aa).

Belongs to the allantoicase family.

The catalysed reaction is allantoate + H2O = (S)-ureidoglycolate + urea. It participates in nitrogen metabolism; (S)-allantoin degradation; (S)-ureidoglycolate from allantoate (aminidohydrolase route): step 1/1. In terms of biological role, utilization of purines as secondary nitrogen sources, when primary sources are limiting. The sequence is that of Probable allantoicase from Schizosaccharomyces pombe (strain 972 / ATCC 24843) (Fission yeast).